A 298-amino-acid polypeptide reads, in one-letter code: Diphthine methyl ester synthase (298 aa).

Residues Leu-9, Asp-85, Gly-88, 113-114 (SV), Leu-164, Leu-222, and His-247 each bind S-adenosyl-L-methionine.

Belongs to the diphthine synthase family.

It localises to the cytoplasm. It carries out the reaction 2-[(3S)-amino-3-carboxypropyl]-L-histidyl-[translation elongation factor 2] + 4 S-adenosyl-L-methionine = diphthine methyl ester-[translation elongation factor 2] + 4 S-adenosyl-L-homocysteine + 3 H(+). It participates in protein modification; peptidyl-diphthamide biosynthesis. In terms of biological role, S-adenosyl-L-methionine-dependent methyltransferase that catalyzes four methylations of the modified target histidine residue in translation elongation factor 2 (EF-2), to form an intermediate called diphthine methyl ester. The four successive methylation reactions represent the second step of diphthamide biosynthesis. This Kluyveromyces lactis (strain ATCC 8585 / CBS 2359 / DSM 70799 / NBRC 1267 / NRRL Y-1140 / WM37) (Yeast) protein is Diphthine methyl ester synthase (DPH5).